A 344-amino-acid chain; its full sequence is Transcription factor HHO3 (344 aa).

Disordered regions lie at residues Lys90–Lys122 and Ala156–Arg212. Residues Asp97–Glu106 show a composition bias toward acidic residues. The segment covering Thr178–Thr188 has biased composition (low complexity). An HTH myb-type domain is found at Ser206–Arg266. Residues Pro237 to Arg262 constitute a DNA-binding region (H-T-H motif). The interval Pro306–Ser344 is disordered. Over residues Gln310–Glu319 the composition is skewed to polar residues. Residues Thr330 to Ser344 show a composition bias toward low complexity.

Its subcellular location is the nucleus. Its function is as follows. Probable transcription factor involved in phosphate signaling in roots. The chain is Transcription factor HHO3 from Arabidopsis thaliana (Mouse-ear cress).